Reading from the N-terminus, the 636-residue chain is MKLCTSQQFGVAVLFIVLNICSPLADASPIAWDFAVTLRDKILFVDNRWRTIGSAAHEFEELSALAFDEAEELIYFNDQQHQNGSIFSLRRDATVASHIVEQAVQRTGNDSVSGLAYDPLNRNLFWADMRQSKIYFASIDTLYTEPPKVLVDLSAEGGRPDGVAVDICRRQLYWTNCKINHATVERIGLNGTGRETIIKQDIDMPRGIVIDQLSDRIFWIDDKVGIFFALESARLDGSDRQLVLKDKHQSPIQLAITEDTIYWTDKADKAVWSYPKPAYNKPATNSSETQPQPTKLASWKDDVYGIVARTGFYQHLQKDAHCASVVRKVKQRLDNKLNNRTHERSAVEERMDALEREHCLNGASYMSRGNFCICPVGYKGARCEISECHNFCVHGTCEISDMGYPKCYCQEDFYGERCEYYKCNGHCLNDGHCLVDKESGELSCDCRENFTGTRCEHNETAHCASYCQHLKQHPDAFVPASCVDICEELHLSNGTIVTEYQAAAPLCADGPSSLRSGSVIIVLVVGIVSSLALVAVIVHGLRLIYKPKRPRIKKTFVVRKQARLNSASDTPLTNRPLATEQCEITIENCCNMNICETPCFDPKLVEQQFAARDRKSPCVKEDKKILIHNMEDDLLT.

Positions 1-27 (MKLCTSQQFGVAVLFIVLNICSPLADA) are cleaved as a signal peptide. The Extracellular segment spans residues 28–517 (SPIAWDFAVT…ADGPSSLRSG (490 aa)). Residues Asn-83 and Asn-109 are each glycosylated (N-linked (GlcNAc...) asparagine). 3 LDL-receptor class B repeats span residues 122-169 (RNLF…DICR), 170-214 (RQLY…DQLS), and 215-260 (DRIF…TEDT). Asn-190 is a glycosylation site (N-linked (GlcNAc...) asparagine). N-linked (GlcNAc...) asparagine glycans are attached at residues Asn-285 and Asn-339. 2 consecutive EGF-like domains span residues 350-384 (RMDA…ARCE) and 419-456 (EYYK…TRCE). Cystine bridges form between Cys-359-Cys-372, Cys-374-Cys-383, Cys-423-Cys-433, Cys-427-Cys-444, and Cys-446-Cys-455. Residues Asn-449, Asn-458, and Asn-493 are each glycosylated (N-linked (GlcNAc...) asparagine). A helical transmembrane segment spans residues 518 to 538 (SVIIVLVVGIVSSLALVAVIV). The Cytoplasmic segment spans residues 539-636 (HGLRLIYKPK…IHNMEDDLLT (98 aa)).

It belongs to the cueball family.

The protein resides in the cell membrane. Has a role in spermatogenesis and oogenesis. This is Protein cueball from Drosophila virilis (Fruit fly).